The chain runs to 869 residues: H(+)/Cl(-) exchange transporter 6 (869 aa).

Over M1–K80 the chain is Cytoplasmic. 2 helical membrane passes run W81–V113 and L128–I150. The Selectivity filter part_1 signature appears at G156–P160. Position 157 (S157) interacts with chloride. Positions I159–L166 form an intramembrane region, helical. Helical transmembrane passes span R176 to G194 and E200 to F217. Positions E198 to P202 match the Selectivity filter part_2 motif. 2 consecutive intramembrane regions (helical) follow at residues F241–A253 and P257–L265. The next 3 membrane-spanning stretches (helical) occupy residues T277–F294, G335–R364, and K371–A392. 3 N-linked (GlcNAc...) asparagine glycosylation sites follow: N410, N422, and N432. Helical transmembrane passes span P462–G481 and G487–I511. A Selectivity filter part_3 motif is present at residues G487–P491. F489 is a chloride binding site. The helical intramembrane region spans G519–V533. The segment at residues V534 to M536 is an intramembrane region (note=Loop between two helices). An intramembrane region (helical) is located at residues T537–T548. The segment at residues N549–T552 is an intramembrane region (note=Loop between two helices). Residues Y553–F571 traverse the membrane as a helical segment. Topologically, residues N572–I869 are cytoplasmic. Chloride is bound at residue Y576. The CBS 1 domain occupies M605 to S662. H630–A632 is a binding site for ATP. Phosphoserine is present on S773. The CBS 2 domain occupies M807 to T868. T849–N852 provides a ligand contact to ATP.

This sequence belongs to the chloride channel (TC 2.A.49) family. ClC-6/CLCN6 subfamily. In terms of processing, N-glycosylated on several asparagine residues. Testis, ovary, small intestine, brain and skeletal muscle. Low level expression in aortic and coronary vascular smooth muscle cells, and aortic endothelial cells. Isoform 3 is only detected in kidney.

It localises to the late endosome membrane. It carries out the reaction 2 chloride(in) + H(+)(out) = 2 chloride(out) + H(+)(in). Voltage-gated channel mediating the exchange of chloride ions against protons. Functions as antiporter and contributes to the acidification of the late endosome lumen. The CLC channel family contains both chloride channels and proton-coupled anion transporters that exchange chloride or another anion for protons. The presence of conserved gating glutamate residues is typical for family members that function as antiporters. This Homo sapiens (Human) protein is H(+)/Cl(-) exchange transporter 6.